The chain runs to 487 residues: Serine/threonine-protein kinase 4 (487 aa).

Met1 bears the N-acetylmethionine mark. The residue at position 3 (Thr3) is a Phosphothreonine. Positions 30–281 (FDVLEKLGEG…ATQLLQHPFV (252 aa)) constitute a Protein kinase domain. ATP contacts are provided by residues 36–44 (LGEGSYGSV) and Lys59. The active-site Proton acceptor is Asp149. Thr183 is modified (phosphothreonine; by autocatalysis). The residue at position 265 (Ser265) is a Phosphoserine. Positions 290 to 310 (LRDLINEAMDVKLKRQESQQR) form a coiled coil. The segment covering 303–312 (KRQESQQREV) has biased composition (basic and acidic residues). Residues 303 to 332 (KRQESQQREVDQDDEENSEEDEMDSGTMVR) are disordered. A compositionally biased stretch (acidic residues) spans 313–326 (DQDDEENSEEDEMD). A Phosphoserine modification is found at Ser320. A phosphothreonine mark is found at Thr340 and Thr367. Residue Thr387 is modified to Phosphothreonine; by PKB/AKT1. Phosphoserine is present on residues Ser410 and Ser414. Tyr433 is subject to Phosphotyrosine. An SARAH domain is found at 433–480 (YEFLKSWTVEDLQKRLLALDPMMEQEIEEIRQKYQSKRQPILDAIEAK).

Belongs to the protein kinase superfamily. STE Ser/Thr protein kinase family. STE20 subfamily. As to quaternary structure, homodimer; mediated via the coiled-coil region. Interacts with NORE1, which inhibits autoactivation. Interacts with and stabilizes SAV1. Interacts with RASSF1. Interacts with FOXO3. Interacts with RASSF2 (via SARAH domain). Interacts with AR, PKB/AKT1, TNNI3 and SIRT1. Interacts with DLG5 (via PDZ domain 3). Interacts with MARK3 and SCRIB in the presence of DLG5. Requires Mg(2+) as cofactor. Post-translationally, autophosphorylated on serine and threonine residues. Phosphorylation at Thr-387 by PKB/AKT1, leads to inhibition of its: kinase activity, nuclear translocation and autophosphorylation at Thr-183. It also diminishes its cleavage by caspases and its ability to phosphorylate FOXO3. Proteolytically cleaved by caspase-3 during apoptosis at Asp-326 and Asp-349 resulting in a 37 kDa or a 39 kDa subunit respectively. The 39 kDa subunit is further cleaved into the 37 kDa form. Proteolytic cleavage results in kinase activation and nuclear translocation of the truncated form (MST1/N). It is less likely that cleavage at Asp-349 is a prerequisite for activation as this site is not conserved in the murine ortholog.

Its subcellular location is the cytoplasm. The protein localises to the nucleus. The catalysed reaction is L-seryl-[protein] + ATP = O-phospho-L-seryl-[protein] + ADP + H(+). It carries out the reaction L-threonyl-[protein] + ATP = O-phospho-L-threonyl-[protein] + ADP + H(+). Its activity is regulated as follows. Inhibited by the C-terminal non-catalytic region. Activated by caspase-cleavage. Full activation also requires homodimerization and autophosphorylation of Thr-183. Activated by RASSF1 which acts by preventing its dephosphorylation. Stress-activated, pro-apoptotic kinase which, following caspase-cleavage, enters the nucleus and induces chromatin condensation followed by internucleosomal DNA fragmentation. Key component of the Hippo signaling pathway which plays a pivotal role in organ size control and tumor suppression by restricting proliferation and promoting apoptosis. The core of this pathway is composed of a kinase cascade wherein STK3/MST2 and STK4/MST1, in complex with its regulatory protein SAV1, phosphorylates and activates LATS1/2 in complex with its regulatory protein MOB1, which in turn phosphorylates and inactivates YAP1 oncoprotein and WWTR1/TAZ. Phosphorylation of YAP1 by LATS2 inhibits its translocation into the nucleus to regulate cellular genes important for cell proliferation, cell death, and cell migration. STK3/MST2 and STK4/MST1 are required to repress proliferation of mature hepatocytes, to prevent activation of facultative adult liver stem cells (oval cells), and to inhibit tumor formation. Phosphorylates 'Ser-14' of histone H2B (H2BS14ph) during apoptosis. Phosphorylates FOXO3 upon oxidative stress, which results in its nuclear translocation and cell death initiation. Phosphorylates MOBKL1A, MOBKL1B and RASSF2. Phosphorylates TNNI3 (cardiac Tn-I) and alters its binding affinity to TNNC1 (cardiac Tn-C) and TNNT2 (cardiac Tn-T). Phosphorylates FOXO1 on 'Ser-212' and regulates its activation and stimulates transcription of PMAIP1 in a FOXO1-dependent manner. Phosphorylates SIRT1 and inhibits SIRT1-mediated p53/TP53 deacetylation, thereby promoting p53/TP53 dependent transcription and apoptosis upon DNA damage. Acts as an inhibitor of PKB/AKT1. Phosphorylates AR on 'Ser-650' and suppresses its activity by intersecting with PKB/AKT1 signaling and antagonizing formation of AR-chromatin complexes. In Aotus nancymaae (Ma's night monkey), this protein is Serine/threonine-protein kinase 4 (STK4).